The chain runs to 1007 residues: Serine/threonine-protein kinase PRP4 homolog (1007 aa).

The segment covering 1–10 (MAAAETQSLR) has biased composition (polar residues). The segment at 1 to 99 (MAAAETQSLR…EGMSPAKRTK (99 aa)) is disordered. Position 2 is an N-acetylalanine (Ala2). Phosphoserine occurs at positions 8, 20, 23, and 32. Basic residues-rich tracts occupy residues 39-59 (KHSR…KHKH) and 67-81 (KKHK…HKRK). Residues 82 to 91 (EVIDASDKEG) are compositionally biased toward basic and acidic residues. Phosphoserine occurs at positions 87 and 93. An N6-acetyllysine; alternate modification is found at Lys99. Lys99 participates in a covalent cross-link: Glycyl lysine isopeptide (Lys-Gly) (interchain with G-Cter in SUMO2); alternate. Lys111 is covalently cross-linked (Glycyl lysine isopeptide (Lys-Gly) (interchain with G-Cter in SUMO2)). Lys117 participates in a covalent cross-link: Glycyl lysine isopeptide (Lys-Gly) (interchain with G-Cter in SUMO2); alternate. Lys117 participates in a covalent cross-link: Glycyl lysine isopeptide (Lys-Gly) (interchain with G-Cter in SUMO1); alternate. At Ser131 the chain carries Phosphoserine. Tyr140 carries the phosphotyrosine modification. Disordered regions lie at residues 140 to 533 (YESG…EEED) and 559 to 583 (SNMS…SPDD). A phosphoserine mark is found at Ser142, Ser144, and Ser166. Residues 157–168 (GNRSSTRSSSTK) show a composition bias toward low complexity. Glycyl lysine isopeptide (Lys-Gly) (interchain with G-Cter in SUMO2) cross-links involve residues Lys170 and Lys177. 2 stretches are compositionally biased toward basic residues: residues 179 to 202 (TTKK…KKSK) and 214 to 230 (RSKS…SKRS). 7 positions are modified to phosphoserine: Ser239, Ser241, Ser257, Ser277, Ser283, Ser292, and Ser294. Positions 247-270 (RSQEKIGKARSPTDDKVKIEDKSK) are enriched in basic and acidic residues. A compositionally biased stretch (basic residues) spans 302–315 (SKDRRSRSKERKSK). Basic and acidic residues predominate over residues 316–325 (RSETDKEKKP). 5 positions are modified to phosphoserine: Ser328, Ser354, Ser356, Ser366, and Ser368. The segment covering 342 to 367 (PSRRPGRSPKRRSLSPKPRDKSRRSR) has biased composition (basic residues). Thr385 carries the phosphothreonine modification. Ser387 is subject to Phosphoserine. Basic and acidic residues-rich tracts occupy residues 395 to 408 (RSLE…ERRR) and 415 to 429 (RPRD…RSKD). A phosphoserine mark is found at Ser427, Ser431, and Ser437. Residues 438 to 497 (PTRRRSRSPIRRRSRSPLRRSRSPRRRSRSPRRRDRGRRSRSRLRRRSRSRGGRRRRSRS) show a composition bias toward basic residues. 7 positions are modified to phosphoserine: Ser518, Ser519, Ser520, Ser565, Ser569, Ser578, and Ser580. A compositionally biased stretch (acidic residues) spans 518–533 (SSSDDNLEDFDVEEED). Positions 562 to 581 (SVPSEPSSPQSSTRTRSPSP) are enriched in low complexity. Glycyl lysine isopeptide (Lys-Gly) (interchain with G-Cter in SUMO2) cross-links involve residues Lys593 and Lys659. One can recognise a Protein kinase domain in the interval 687–1003 (YNVYGYTGQG…INQALQHAFI (317 aa)). Residues 693-701 (TGQGVFSNV) and Lys717 each bind ATP. Residue Lys717 is modified to N6-acetyllysine. The active-site Proton acceptor is the Asp815. At Tyr849 the chain carries Phosphotyrosine. Ser852 bears the Phosphoserine mark.

The protein belongs to the protein kinase superfamily. CMGC Ser/Thr protein kinase family. Interacts with CLK1 C-terminus. Associates with the U5 snRNP and NCOR1 deacetylase complexes. Identified in the spliceosome C complex. Post-translationally, phosphorylated by CLK1. Autophosphorylated; phosphorylation inhibits interaction with its targets, such as PRPF6 or SMARCA4.

It is found in the nucleus. The protein localises to the chromosome. The protein resides in the centromere. It localises to the kinetochore. It catalyses the reaction L-seryl-[protein] + ATP = O-phospho-L-seryl-[protein] + ADP + H(+). The catalysed reaction is L-threonyl-[protein] + ATP = O-phospho-L-threonyl-[protein] + ADP + H(+). Its function is as follows. Serine/threonine kinase involved in spliceosomal assembly as well as mitosis and signaling regulation. Connects chromatin mediated regulation of transcription and pre-mRNA splicing. During spliceosomal assembly, interacts with and phosphorylates PRPF6 and PRPF31, components of the U4/U6-U5 tri-small nuclear ribonucleoprotein (snRNP), to facilitate the formation of the spliceosome B complex. Plays a role in regulating transcription and the spindle assembly checkpoint (SAC). Associates with U5 snRNP and NCOR1 deacetylase complexes which may allow a coordination of pre-mRNA splicing with chromatin remodeling events involved in transcriptional regulation. Associates and probably phosphorylates SMARCA4 and NCOR1. Phosphorylates SRSF1. Associates with kinetochores during mitosis and is necessary for recruitment and maintenance of the checkpoint proteins such as MAD1L1 and MAD12L1 at the kinetochores. Phosphorylates and regulates the activity of the transcription factors such as ELK1 and KLF13. Phosphorylates nuclear YAP1 and WWTR1/TAZ which induces nuclear exclusion and regulates Hippo signaling pathway, involved in tissue growth control. In Pongo abelii (Sumatran orangutan), this protein is Serine/threonine-protein kinase PRP4 homolog (PRP4K).